A 523-amino-acid chain; its full sequence is Bifunctional purine biosynthesis protein PurH (523 aa).

The 149-residue stretch at 1-149 (MSDPVIKRAL…KNNESVTVIT (149 aa)) folds into the MGS-like domain.

Belongs to the PurH family.

The enzyme catalyses (6R)-10-formyltetrahydrofolate + 5-amino-1-(5-phospho-beta-D-ribosyl)imidazole-4-carboxamide = 5-formamido-1-(5-phospho-D-ribosyl)imidazole-4-carboxamide + (6S)-5,6,7,8-tetrahydrofolate. The catalysed reaction is IMP + H2O = 5-formamido-1-(5-phospho-D-ribosyl)imidazole-4-carboxamide. Its pathway is purine metabolism; IMP biosynthesis via de novo pathway; 5-formamido-1-(5-phospho-D-ribosyl)imidazole-4-carboxamide from 5-amino-1-(5-phospho-D-ribosyl)imidazole-4-carboxamide (10-formyl THF route): step 1/1. It functions in the pathway purine metabolism; IMP biosynthesis via de novo pathway; IMP from 5-formamido-1-(5-phospho-D-ribosyl)imidazole-4-carboxamide: step 1/1. In Chlorobaculum parvum (strain DSM 263 / NCIMB 8327) (Chlorobium vibrioforme subsp. thiosulfatophilum), this protein is Bifunctional purine biosynthesis protein PurH.